A 702-amino-acid chain; its full sequence is Elongation factor G (702 aa).

One can recognise a tr-type G domain in the interval 8-196 (ERYRNIGISA…MKAIIWDEAS (189 aa)). Residues 17-24 (AHIDAGKT), 88-92 (DTPGH), and 142-145 (NKMD) each bind GTP.

This sequence belongs to the TRAFAC class translation factor GTPase superfamily. Classic translation factor GTPase family. EF-G/EF-2 subfamily.

Its subcellular location is the cytoplasm. In terms of biological role, catalyzes the GTP-dependent ribosomal translocation step during translation elongation. During this step, the ribosome changes from the pre-translocational (PRE) to the post-translocational (POST) state as the newly formed A-site-bound peptidyl-tRNA and P-site-bound deacylated tRNA move to the P and E sites, respectively. Catalyzes the coordinated movement of the two tRNA molecules, the mRNA and conformational changes in the ribosome. The polypeptide is Elongation factor G (fusA) (Thiomonas delicata (Thiomonas cuprina)).